Reading from the N-terminus, the 344-residue chain is UDP-glucose 4-epimerase (344 aa).

Residues 15–17 (GYI), 36–40 (DNLSN), 63–64 (DI), Phe85, and Lys89 contribute to the NAD(+) site. 129–131 (SAT) provides a ligand contact to substrate. Tyr153 serves as the catalytic Proton acceptor. Residues Lys157 and Tyr181 each contribute to the NAD(+) site. Residues 181–183 (YFN), 202–204 (NNL), 220–222 (SIF), Arg235, and 297–300 (RKGD) each bind substrate.

It belongs to the NAD(P)-dependent epimerase/dehydratase family. In terms of assembly, homodimer. Requires NAD(+) as cofactor.

It catalyses the reaction UDP-alpha-D-glucose = UDP-alpha-D-galactose. It carries out the reaction UDP-N-acetyl-alpha-D-glucosamine = UDP-N-acetyl-alpha-D-galactosamine. Its pathway is carbohydrate metabolism; galactose metabolism. In terms of biological role, catalyzes two distinct but analogous reactions: the reversible epimerization of UDP-glucose to UDP-galactose and the reversible epimerization of UDP-N-acetylglucosamine to UDP-N-acetylgalactosamine. The reaction with UDP-Gal plays a critical role in the Leloir pathway of galactose catabolism in which galactose is converted to the glycolytic intermediate glucose 6-phosphate. It contributes to the catabolism of dietary galactose and enables the endogenous biosynthesis of both UDP-Gal and UDP-GalNAc when exogenous sources are limited. Both UDP-sugar interconversions are important in the synthesis of glycoproteins and glycolipids. This chain is UDP-glucose 4-epimerase (galE), found in Dictyostelium discoideum (Social amoeba).